Here is a 463-residue protein sequence, read N- to C-terminus: FAD-dependent monooxygenase nodM (463 aa).

Residues 5 to 25 (EFKVIIVGGSLAGLTLAHCLL) traverse the membrane as a helical segment. FAD is bound by residues E35, G49, R108, D305, and A318. A helical membrane pass occupies residues 438-458 (ILLGFTGVFTSALAMVVLLHI).

The protein belongs to the paxM FAD-dependent monooxygenase family. The cofactor is FAD.

The protein localises to the membrane. Its pathway is secondary metabolite biosynthesis. Its function is as follows. FAD-dependent monooxygenase; part of the gene cluster that mediates the biosynthesis of the indole diterpenes nodulisporic acids (NA). Nodulisporic acid A (NAA) and its chemically modified derivatives are of particular significance because of their highly potent insecticidal activity against blood-feeding arthropods and lack of observable adverse effects on mammals, in particular the tremogenicity associated with the paspaline-derived IDTs is not observed. The geranylgeranyl diphosphate (GGPP) synthase ggs1, localized outside of the cluster, is proposed to catalyze the first step in nodulisporic acid biosynthesis via conversion of farnesyl pyrophosphate and isopentyl pyrophosphate into geranylgeranyl pyrophosphate (GGPP). Condensation of indole-3-glycerol phosphate with GGPP by the prenyl transferase nodC then forms 3-geranylgeranylindole (3-GGI). Epoxidation by the FAD-dependent monooxygenase nodM leads to a single-epoxidized-GGI that is substrate of the terpene cyclase nodB for cyclization to yield emindole SB. The terminal methyl carbon, C28, of emindole SB is then oxidized by the cytochrome P450 monooxygenase nodW to produce nodulisporic acid F (NAF), the pentacyclic core of NAA. NAF is converted to nodulisporic acid E (NAE) via prenylation. This step is probably performed by one of the indole diterpene prenyltransferases nodD1 or nodD2. Several oxidation steps performed by the FAD-linked oxidoreductase nodO and one of the cytochrome P450 monooxygenase nodR, nodX or nodZ further convert NAE to nodulisporic acid D (NAD). NAD is substrate of cytochrome P450 monooxygenase nodJ to produce the precursor of nodulisporic acid C (NAC), converted to NAC by one of the indole diterpene prenyltransferases nodD1 or nodD2. The FAD-dependent monooxygenase nodY2 then oxidizes NAC to nodulisporic acid B (NAB). Finally NAB is converted to NAA by one of the cytochrome P450 monooxygenases nodR, nodX or nodZ. The sequence is that of FAD-dependent monooxygenase nodM from Hypoxylon pulicicidum.